Here is a 78-residue protein sequence, read N- to C-terminus: Large ribosomal subunit protein bL28 (78 aa).

It belongs to the bacterial ribosomal protein bL28 family.

This Aromatoleum aromaticum (strain DSM 19018 / LMG 30748 / EbN1) (Azoarcus sp. (strain EbN1)) protein is Large ribosomal subunit protein bL28.